The chain runs to 479 residues: Mitochondria-eating protein (479 aa).

2 coiled-coil regions span residues 109–161 (ERKL…LATT) and 187–223 (LRRLDHLNDCEQQIERLRDELSILDAQKSVLQSRIAR). Disordered stretches follow at residues 220–251 (RIARSRSPSPRRIRSRSPSPLPLRSCSPGRAR) and 456–479 (RSRSRSQNRSRSVSPLLSHLSRSR). Low complexity predominate over residues 235-249 (RSPSPLPLRSCSPGR).

This sequence belongs to the MIEAP family.

The protein localises to the cytoplasm. The protein resides in the cytosol. Its subcellular location is the mitochondrion outer membrane. It is found in the mitochondrion matrix. Its function is as follows. Key regulator of mitochondrial quality that mediates the repairing or degradation of unhealthy mitochondria in response to mitochondrial damage. Mediator of mitochondrial protein catabolic process (also named MALM) by mediating the degradation of damaged proteins inside mitochondria by promoting the accumulation in the mitochondrial matrix of hydrolases that are characteristic of the lysosomal lumen. Also involved in mitochondrion degradation of damaged mitochondria by promoting the formation of vacuole-like structures (named MIV), which engulf and degrade unhealthy mitochondria by accumulating lysosomes. Binds cardiolipin. May form molecular condensates (non-membrane-bounded organelles) within mitochondria that compartmentalize and promote cardiolipin metabolism. This Gallus gallus (Chicken) protein is Mitochondria-eating protein (SPATA18).